The sequence spans 105 residues: Small ribosomal subunit protein uS10 (105 aa).

The protein belongs to the universal ribosomal protein uS10 family. As to quaternary structure, part of the 30S ribosomal subunit.

Involved in the binding of tRNA to the ribosomes. The chain is Small ribosomal subunit protein uS10 from Agathobacter rectalis (strain ATCC 33656 / DSM 3377 / JCM 17463 / KCTC 5835 / VPI 0990) (Eubacterium rectale).